Here is a 353-residue protein sequence, read N- to C-terminus: MATAAMTKVFVLLFLVAACYLPAHAAAAECDCATDTAGRDKAQALRLKVIAIFCILAGSTVGAALPSLGGRFPAIQPETDVFLSVKAFAGGVILATGLVHILPAAFEALSSPCLVGGPWKRFPFAGMVAMVSAIGTLIVDTVATGYFHRTDAKRKAAAVADEPADDLEASDEHSHGHAHGMSVMSVAPAGEEDLVRHRVISQVLELGVVVHSLIIGMSLGASDFPSTVRPLVPALTFHQFFEGIGLGGCIVQAKFRVRSVVTMALFFSLTTPAGIVVGIGISSVYDANSPTALVVQGLLEAAAAGILVYMALVDILAEDFMKTKVQRRGRLQLAMNVALLLGAGLMSMIAIWA.

A signal peptide spans 1–27; sequence MATAAMTKVFVLLFLVAACYLPAHAAA. Topologically, residues 28 to 48 are extracellular; that stretch reads AECDCATDTAGRDKAQALRLK. A helical transmembrane segment spans residues 49–69; it reads VIAIFCILAGSTVGAALPSLG. The Cytoplasmic segment spans residues 70 to 86; that stretch reads GRFPAIQPETDVFLSVK. A helical membrane pass occupies residues 87–107; that stretch reads AFAGGVILATGLVHILPAAFE. At 108 to 121 the chain is on the extracellular side; the sequence is ALSSPCLVGGPWKR. The helical transmembrane segment at 122–142 threads the bilayer; the sequence is FPFAGMVAMVSAIGTLIVDTV. At 143-198 the chain is on the cytoplasmic side; the sequence is ATGYFHRTDAKRKAAAVADEPADDLEASDEHSHGHAHGMSVMSVAPAGEEDLVRHR. The chain crosses the membrane as a helical span at residues 199–219; it reads VISQVLELGVVVHSLIIGMSL. Residues 220-230 are Extracellular-facing; it reads GASDFPSTVRP. The chain crosses the membrane as a helical span at residues 231–251; the sequence is LVPALTFHQFFEGIGLGGCIV. Residues 252-260 are Cytoplasmic-facing; sequence QAKFRVRSV. A helical membrane pass occupies residues 261 to 281; that stretch reads VTMALFFSLTTPAGIVVGIGI. Topologically, residues 282-292 are extracellular; the sequence is SSVYDANSPTA. The chain crosses the membrane as a helical span at residues 293–313; it reads LVVQGLLEAAAAGILVYMALV. The Cytoplasmic portion of the chain corresponds to 314–332; it reads DILAEDFMKTKVQRRGRLQ. A helical membrane pass occupies residues 333 to 353; sequence LAMNVALLLGAGLMSMIAIWA.

Belongs to the ZIP transporter (TC 2.A.5) family.

The protein resides in the cell membrane. Functionally, zinc transporter that mediates zinc uptake from the rhizosphere and may be responsible for the translocation of zinc within the plant. The chain is Zinc transporter 5 (ZIP5) from Oryza sativa subsp. japonica (Rice).